The sequence spans 162 residues: Selenoprotein F (162 aa).

A signal peptide spans 1–28; the sequence is MAAGQGGWLRPALGLRLLLATAFQAVSA. A non-standard amino acid (selenocysteine) is located at residue Sec-93.

The protein belongs to the selenoprotein M/F family. In terms of assembly, forms a tight complex with UGGT1/UGCGL1. Interacts with UGGT2/UGCGL2. Interacts with RDH11. As to expression, highest levels in prostate, lower levels in brain, lung, thyroid gland, and large intestine.

It localises to the endoplasmic reticulum lumen. In terms of biological role, may be involved in redox reactions associated with the formation of disulfide bonds. May contribute to the quality control of protein folding in the endoplasmic reticulum. May regulate protein folding by enhancing the catalytic activity of UGGT1/UGCGL1 and UGGT2/UGCGL2. In Rattus norvegicus (Rat), this protein is Selenoprotein F.